An 87-amino-acid chain; its full sequence is Neurotoxin LmNaTx64.1 (87 aa).

A signal peptide spans 1-18 (MKILFLIILTAFFIGVHC). An LCN-type CS-alpha/beta domain is found at 19 to 85 (KHGYPIIRAG…TWSRATNKCK (67 aa)). Disulfide bonds link Cys33–Cys84, Cys37–Cys58, Cys44–Cys65, and Cys48–Cys67. The residue at position 84 (Cys84) is a Cysteine amide.

This sequence belongs to the long (4 C-C) scorpion toxin superfamily. Sodium channel inhibitor family. Beta subfamily. Expressed by the venom gland.

It localises to the secreted. Binds voltage-independently at site-4 of sodium channels (Nav) and shift the voltage of activation toward more negative potentials thereby affecting sodium channel activation and promoting spontaneous and repetitive firing. The chain is Neurotoxin LmNaTx64.1 from Lychas mucronatus (Chinese swimming scorpion).